The chain runs to 234 residues: tRNA (guanine-N(1)-)-methyltransferase (234 aa).

Residues Gly-112 and 132–137 (IGDFIL) each bind S-adenosyl-L-methionine.

This sequence belongs to the RNA methyltransferase TrmD family. Homodimer.

Its subcellular location is the cytoplasm. The catalysed reaction is guanosine(37) in tRNA + S-adenosyl-L-methionine = N(1)-methylguanosine(37) in tRNA + S-adenosyl-L-homocysteine + H(+). Its function is as follows. Specifically methylates guanosine-37 in various tRNAs. This chain is tRNA (guanine-N(1)-)-methyltransferase, found in Campylobacter jejuni (strain RM1221).